Here is a 72-residue protein sequence, read N- to C-terminus: Translation initiation factor IF-1 (72 aa).

The region spanning 1 to 72 is the S1-like domain; that stretch reads MSKDDVIEID…DKGRITYRYK (72 aa).

It belongs to the IF-1 family. Component of the 30S ribosomal translation pre-initiation complex which assembles on the 30S ribosome in the order IF-2 and IF-3, IF-1 and N-formylmethionyl-tRNA(fMet); mRNA recruitment can occur at any time during PIC assembly.

It localises to the cytoplasm. In terms of biological role, one of the essential components for the initiation of protein synthesis. Stabilizes the binding of IF-2 and IF-3 on the 30S subunit to which N-formylmethionyl-tRNA(fMet) subsequently binds. Helps modulate mRNA selection, yielding the 30S pre-initiation complex (PIC). Upon addition of the 50S ribosomal subunit IF-1, IF-2 and IF-3 are released leaving the mature 70S translation initiation complex. The polypeptide is Translation initiation factor IF-1 (Campylobacter hominis (strain ATCC BAA-381 / DSM 21671 / CCUG 45161 / LMG 19568 / NCTC 13146 / CH001A)).